A 149-amino-acid chain; its full sequence is Transthyretin (149 aa).

The signal sequence occupies residues 1-22 (MAFHSLLLLCLAGLAFVSETAA). Sulfocysteine is present on C32. Residue K37 participates in L-thyroxine binding. A 4-carboxyglutamate modification is found at E64. 2 residues coordinate L-thyroxine: E76 and S139.

Belongs to the transthyretin family. Homotetramer. Dimer of dimers. In the homotetramer, subunits assemble around a central channel that can accommodate two ligand molecules. Interacts with RBP4. Sulfonation of the reactive cysteine Cys-32 enhances the stability of the native conformation of TTR, avoiding misassembly of the protein leading to amyloid formation. As to expression, detected in liver.

It is found in the secreted. Thyroid hormone-binding protein. Probably transports thyroxine from the bloodstream to the brain. This is Transthyretin (TTR) from Macropus giganteus (Eastern gray kangaroo).